A 434-amino-acid chain; its full sequence is Cysteine--tRNA ligase (434 aa).

Cys-28 lines the Zn(2+) pocket. The short motif at 30–40 (PTVYDDIHIGN) is the 'HIGH' region element. Zn(2+)-binding residues include Cys-207, His-232, and Glu-236. Positions 264 to 268 (KMSKS) match the 'KMSKS' region motif. ATP is bound at residue Lys-267.

The protein belongs to the class-I aminoacyl-tRNA synthetase family. In terms of assembly, monomer. Zn(2+) is required as a cofactor.

The protein resides in the cytoplasm. The catalysed reaction is tRNA(Cys) + L-cysteine + ATP = L-cysteinyl-tRNA(Cys) + AMP + diphosphate. This Acholeplasma laidlawii (strain PG-8A) protein is Cysteine--tRNA ligase.